A 65-amino-acid polypeptide reads, in one-letter code: Light-harvesting protein B800/830/1020 alpha-2 chain (65 aa).

Residues Met-1–Thr-13 lie on the Cytoplasmic side of the membrane. The chain crosses the membrane as a helical span at residues Ala-14–Ser-34. His-29 serves as a coordination point for a bacteriochlorophyll. Topologically, residues Ser-35–Gly-65 are periplasmic.

The protein belongs to the antenna complex alpha subunit family. The core complex is formed by different alpha and beta chains, binding bacteriochlorophyll molecules, and arranged most probably in tetrameric structures disposed around the reaction center. The non-pigmented gamma chains may constitute additional components.

The protein localises to the cell inner membrane. Its function is as follows. Antenna complexes are light-harvesting systems, which transfer the excitation energy to the reaction centers. In Halorhodospira halochloris (Ectothiorhodospira halochloris), this protein is Light-harvesting protein B800/830/1020 alpha-2 chain.